Reading from the N-terminus, the 474-residue chain is MSRLVVVSNRIAPPDEHAASAGGLAVGILGALKAAGGLWFGWSGETGNEDQPLKKVKKGNITWASFNLSEQDLDEYYNQFSNAVLWPAFHYRLDLVQFQRPAWDGYLRVNALLADKLLPLLQDDDIIWIHDYHLLPFAHELRKRGVNNRIGFFLHIPFPTPEIFNALPTYDTLLEQLCDYDLLGFQTENDRLAFLDCLSNLTRVTTRSAKSHTAWGKAFRTEVYPIGIEPKEIAKQAAGPLPPKLAQLKAELKNVQNIFSVERLDYSKGLPERFLAYEALLEKYPQHHGKIRYTQIAPTSRGDVQAYQDIRHQLENEAGRINGKYGQLGWTPLYYLNQHFDRKLLMKIFRYSDVGLVTPLRDGMNLVAKEYVAAQDPANPGVLVLSQFAGAANELTSALIVNPYDRDEVAVALDRALTMSLAERISRHAEMLDVIVKNDINHWQECFISDLKQIVPRSAESQQRDKVATFPKLV.

A D-glucose 6-phosphate-binding site is contributed by R10. 22 to 23 provides a ligand contact to UDP-alpha-D-glucose; it reads GG. Positions 77 and 131 each coordinate D-glucose 6-phosphate. Positions 263 and 268 each coordinate UDP-alpha-D-glucose. R301 serves as a coordination point for D-glucose 6-phosphate. UDP-alpha-D-glucose-binding positions include F340 and 366–370; that span reads LVAKE.

The protein belongs to the glycosyltransferase 20 family. Homotetramer.

The catalysed reaction is D-glucose 6-phosphate + UDP-alpha-D-glucose = alpha,alpha-trehalose 6-phosphate + UDP + H(+). Its pathway is glycan biosynthesis; trehalose biosynthesis. In terms of biological role, probably involved in the osmoprotection via the biosynthesis of trehalose. Catalyzes the transfer of glucose from UDP-alpha-D-glucose (UDP-Glc) to D-glucose 6-phosphate (Glc-6-P) to form trehalose-6-phosphate. Acts with retention of the anomeric configuration of the UDP-sugar donor. In Escherichia coli O157:H7, this protein is Trehalose-6-phosphate synthase.